A 167-amino-acid polypeptide reads, in one-letter code: Transcriptional regulator MraZ (167 aa).

2 SpoVT-AbrB domains span residues Glu8–His51 and Ser92–Thr135.

The protein belongs to the MraZ family. Forms oligomers.

The protein localises to the cytoplasm. It localises to the nucleoid. The sequence is that of Transcriptional regulator MraZ from Ruegeria pomeroyi (strain ATCC 700808 / DSM 15171 / DSS-3) (Silicibacter pomeroyi).